The sequence spans 740 residues: Homeobox protein 4 (740 aa).

A compositionally biased stretch (polar residues) spans 1-13 (MNTVEENNTKITD). Disordered regions lie at residues 1-41 (MNTV…ENLS) and 179-491 (NNNN…NNEI). Composition is skewed to low complexity over residues 14 to 34 (NNNN…NNKN), 179 to 241 (NNNN…PQQN), 251 to 288 (NNNN…NNNN), and 303 to 316 (STTD…SVPS). A coiled-coil region spans residues 254-287 (NINNNNINKNNNNYNNNNNNKNNNNNNNNNNNNN). The segment covering 317 to 328 (NKKKSSKTKQKS) has biased composition (basic residues). Positions 339-363 (HKSNYHQQPNQNSQHLQSKPNSPIL) are enriched in polar residues. Composition is skewed to low complexity over residues 365–390 (SSPL…SPPQ) and 397–491 (NNNF…NNEI). Positions 472–500 (NTNTNNNNNKNNNNNNNNEIENNNNEELI) form a coiled coil. Residues 605–667 (RPKKGAKLSK…NTRRRKVPTL (63 aa)) constitute a DNA-binding region (homeobox). Over residues 686–722 (NNNNNNGGNSNFKNNNNNTITTTSTSNNNNNNNNNNH) the composition is skewed to low complexity. The tract at residues 686–740 (NNNNNNGGNSNFKNNNNNTITTTSTSNNNNNNNNNNHNEMECDDGENEESSEYDD) is disordered. The segment covering 726-740 (ECDDGENEESSEYDD) has biased composition (acidic residues).

It localises to the nucleus. In terms of biological role, putative transcription factor. In Dictyostelium discoideum (Social amoeba), this protein is Homeobox protein 4 (hbx4).